Here is a 359-residue protein sequence, read N- to C-terminus: Proton-gated ion channel (359 aa).

Residues 1–43 form the signal peptide; it reads MFPTGWRPKLSESIAASRMLWQPMAAVAVVQIGLLWFSPPVWG. Residues 44 to 235 are Periplasmic-facing; it reads QDMVSPPPPI…LDYQLRISRQ (192 aa). Residues 236-258 traverse the membrane as a helical segment; it reads YFSYIPNIILPMLFILFISWTAF. The Cytoplasmic portion of the chain corresponds to 259-261; it reads WST. The chain crosses the membrane as a helical span at residues 262–286; sequence SYEANVTLVVSTLIAHIAFNILVET. The Periplasmic portion of the chain corresponds to 287-294; it reads NLPKTPYM. The chain crosses the membrane as a helical span at residues 295–323; it reads TYTGAIIFMIYLFYFVAVIEVTVQHYLKV. Residues 324–326 lie on the Cytoplasmic side of the membrane; the sequence is ESQ. A helical transmembrane segment spans residues 327–359; the sequence is PARAASITRASRIAFPVVFLLANIILAFLFFGF.

This sequence belongs to the ligand-gated ion channel (TC 1.A.9) family. As to quaternary structure, homopentamer.

Its subcellular location is the cell inner membrane. With respect to regulation, tetraethylammonium (TEA) and tetrabutylammonium (TBA) inhibit the proton-activated currents in a dose- and voltage-dependent manner in vitro, whereas the blocker of acid sensing ion channels, amiloride, has no effect. Channel current of GLIC can be inhibited by inhaled and intravenous general anesthetics at and below concentrations used clinically. Ion conduction is also inhibited by lidocaine and by divalent transition metal ions such as cadmium ions. In terms of biological role, cationic channel with similar permeabilities for Na(+) and K(+), that is activated by an increase of the proton concentration on the extracellular side. Displays no permeability for chloride ions. Shows slow kinetics of activation, no desensitization and a single channel conductance of 8 pS. Might contribute to adaptation to external pH change. This Gloeobacter violaceus (strain ATCC 29082 / PCC 7421) protein is Proton-gated ion channel (glvI).